The primary structure comprises 225 residues: Probable CDP-diacylglycerol--inositol 3-phosphatidyltransferase 2 (225 aa).

2 helical membrane passes run 6–26 (PATL…RVLL) and 29–49 (IAFS…FFSF). Positions 52 and 55 each coordinate Mg(2+). 3 residues coordinate a CDP-1,2-diacyl-sn-glycerol: G56, R60, and S66. Residues D73 and D77 each contribute to the Mg(2+) site. Catalysis depends on D77, which acts as the Proton acceptor. 3 helical membrane passes run 84 to 104 (LLVI…LLAL), 143 to 163 (MFMG…LLIA), and 184 to 204 (LSLL…INVI).

The protein belongs to the CDP-alcohol phosphatidyltransferase class-I family. Requires Mg(2+) as cofactor. Mn(2+) is required as a cofactor.

Its subcellular location is the membrane. The enzyme catalyses a CDP-1,2-diacyl-sn-glycerol + myo-inositol = a 1,2-diacyl-sn-glycero-3-phospho-(1D-myo-inositol) + CMP + H(+). Functionally, catalyzes the biosynthesis of phosphatidylinositol (PtdIns) as well as PtdIns:inositol exchange reaction. May thus act to reduce an excessive cellular PtdIns content. The exchange activity is due to the reverse reaction of PtdIns synthase and is dependent on CMP, which is tightly bound to the enzyme. The sequence is that of Probable CDP-diacylglycerol--inositol 3-phosphatidyltransferase 2 (PIS2) from Arabidopsis thaliana (Mouse-ear cress).